Reading from the N-terminus, the 68-residue chain is Neuronal regeneration-related protein (68 aa).

Residues 21-54 (MEGRLPKGRLPVPKEVNRKKNDETNAASLTPLGS) are disordered. Positions 44–54 (TNAASLTPLGS) are enriched in polar residues.

In terms of assembly, interacts with the latency-associated peptides (LAP) of TGFB1 and TGFB2; the interaction results in a decrease in TGFB autoinduction. Interacts with FLNA. Post-translationally, phosphorylated on Ser-59. Phosphorylation decreases stability and activity.

It is found in the cytoplasm. In terms of biological role, may have roles in neural function and cellular differentiation. Ectopic expression promotes axonal regeneration, induces differentiation of fibroblast into myofibroblast, induces myofibroblast ameboid migration, augments motility of gliomas, and increases retinoic-acid regulation of lipid-droplet biogenesis. Down-regulates the expression of TGFB1 and TGFB2 but not of TGFB3. May play a role in the regulation of alveolar generation. This is Neuronal regeneration-related protein (NREP) from Macaca fascicularis (Crab-eating macaque).